A 281-amino-acid chain; its full sequence is MKLIIISGRSGSGKSIVLRSLEDLGYYCVDNIPVNLLPTLTHTVADEYDQVAVSIDVRNLPKDPNELVEILDYLPSTWEMTILYLDASDDVLIKRFSETRRLHPLSKQNKSLSGAIQAESQLLAPIAERADLYIDTDQLSIHQLAELVRERILGKKSSRLVLVFESFGFKHGIPKDADYVFDARFLPNPHWEPDLKPLTGLDSPVEIFLGSQPIVTKFIWQIQNLISTWLPHLERNNRSYVTIAIGCTGGQHRSVYVVEMLAKTFSTSHPDVQIRHRELNR.

8 to 15 contacts ATP; sequence GRSGSGKS. Position 56–59 (56–59) interacts with GTP; the sequence is DVRN.

It belongs to the RapZ-like family.

Functionally, displays ATPase and GTPase activities. This Pseudoalteromonas atlantica (strain T6c / ATCC BAA-1087) protein is Nucleotide-binding protein Patl_0571.